Consider the following 225-residue polypeptide: Ribosomal RNA small subunit methyltransferase G (225 aa).

Residues Gly-62, 113–114, and Lys-130 contribute to the S-adenosyl-L-methionine site; that span reads AE.

This sequence belongs to the methyltransferase superfamily. RNA methyltransferase RsmG family.

The protein resides in the cytoplasm. Specifically methylates the N7 position of a guanine in 16S rRNA. This Petrotoga mobilis (strain DSM 10674 / SJ95) protein is Ribosomal RNA small subunit methyltransferase G.